The primary structure comprises 311 residues: DNA-directed RNA polymerase subunit alpha (311 aa).

Residues Met-1–Thr-228 are alpha N-terminal domain (alpha-NTD). Residues Pro-239–Val-311 are alpha C-terminal domain (alpha-CTD).

Belongs to the RNA polymerase alpha chain family. In terms of assembly, in cyanobacteria the RNAP catalytic core is composed of 2 alpha, 1 beta, 1 beta', 1 gamma and 1 omega subunit. When a sigma factor is associated with the core the holoenzyme is formed, which can initiate transcription.

The catalysed reaction is RNA(n) + a ribonucleoside 5'-triphosphate = RNA(n+1) + diphosphate. DNA-dependent RNA polymerase catalyzes the transcription of DNA into RNA using the four ribonucleoside triphosphates as substrates. The sequence is that of DNA-directed RNA polymerase subunit alpha from Prochlorococcus marinus (strain MIT 9312).